We begin with the raw amino-acid sequence, 439 residues long: Glucan 1,3-beta-glucosidase (439 aa).

The signal sequence occupies residues 1–18 (MLLSLLFLLSTFAFGALT). The active-site Proton donor is the glutamate 227. Disulfide bonds link cysteine 311/cysteine 437 and cysteine 336/cysteine 366. Glutamate 328 (nucleophile) is an active-site residue.

Belongs to the glycosyl hydrolase 5 (cellulase A) family.

The protein resides in the secreted. It carries out the reaction Successive hydrolysis of beta-D-glucose units from the non-reducing ends of (1-&gt;3)-beta-D-glucans, releasing alpha-glucose.. Functionally, beta-glucanases participate in the metabolism of beta-glucan, the main structural component of the cell wall. It could also function biosynthetically as a transglycosylase. The protein is Glucan 1,3-beta-glucosidase (EXG1) of Lachancea kluyveri (strain ATCC 58438 / CBS 3082 / BCRC 21498 / NBRC 1685 / JCM 7257 / NCYC 543 / NRRL Y-12651) (Yeast).